A 501-amino-acid chain; its full sequence is Type B diterpene cyclase (501 aa).

Belongs to the terpene synthase family. Monomer. Mg(2+) is required as a cofactor.

It carries out the reaction geranylgeranyl diphosphate = tuberculosinyl diphosphate. Its activity is regulated as follows. Strongly inhibited by 15-aza-dihydrogeranylgeraniol and 5-isopropyl-N,N,N,2-tetramethyl-4-(piperidine-1-carbonyloxy)benzenaminium chloride (Amo-1618). Inhibited by GGPP concentrations higher than 50 uM. Functionally, catalyzes the formation of tuberculosinyl diphosphate from geranylgeranyl diphosphate (GGPP). It could also react with (14R/S)-14,15-oxidoGGPP to generate 3alpha- and 3beta-hydroxytuberculosinyl diphosphate. The polypeptide is Type B diterpene cyclase (Mycobacterium tuberculosis (strain ATCC 25618 / H37Rv)).